The chain runs to 135 residues: ATP synthase epsilon chain (135 aa).

The protein belongs to the ATPase epsilon chain family. In terms of assembly, F-type ATPases have 2 components, CF(1) - the catalytic core - and CF(0) - the membrane proton channel. CF(1) has five subunits: alpha(3), beta(3), gamma(1), delta(1), epsilon(1). CF(0) has three main subunits: a, b and c.

It localises to the cell inner membrane. Functionally, produces ATP from ADP in the presence of a proton gradient across the membrane. The sequence is that of ATP synthase epsilon chain from Rhodopseudomonas palustris (strain HaA2).